The following is a 333-amino-acid chain: Gramillins biosynthetic cluster protein FGSG_00039 (333 aa).

Its pathway is mycotoxin biosynthesis. In terms of biological role, part of the gene cluster that mediates the biosynthesis of gramillins A and B, bicyclic lipopeptides that induce cell death in maize leaves but not in wheat leaves. The nonribosomal peptide synthetase GRA1 incorporates respectively a glutamic adic (Glu), a leucine (Leu), a serine (Ser), a hydroxyglutamine (HOGln), a 2-amino decanoic acid, and 2 cysteins (CysB and CysA). The biosynthesis of 2-amino decanoic acid incorporated in gramillins could be initiated by a fatty acid synthase composed of the alpha and beta subunits FGSG_00036 and FGSG_11656. The cytochrome P450 monooxygenase FGSG_15680 could hydroxylate the fatty acid chain. Subsequent oxidation to the ketone by the oxidoreductase FGSG_00048 and transamination by aminotransferase FGSG_00049 could form 2-amino-decanoic acid. On the other hand, FGSG_15680 could also be responsible for the HO-modified glutamine at the gamma-position. Whether hydroxylation occurs on the fully assembled product or on the Gln residue prior to assembly into the gramillins requires further proof. The thioredoxin FGSG_00043 could also be required for the disulfide-bond formation between CysA and CysB. The specific involvement of the remaining proteins from the cluster is more difficult to discern, but could have broader regulatory (FGSG_00040 and FGSG_11657) or enzymatic functions (FGSG_00044 and FGSG_00045). The final C-domain of GRA1 does not possess the expected sequence of a termination CT domain, often implicated in macrocyclization and release of a cyclopeptidein fungal NRPs; and the thioesterase FGSG_00047 may act in concert with the terminal C-domain of GRA1 to catalyze the formation of the macrocyclic anhydride and release of the products. The polypeptide is Gramillins biosynthetic cluster protein FGSG_00039 (Gibberella zeae (strain ATCC MYA-4620 / CBS 123657 / FGSC 9075 / NRRL 31084 / PH-1) (Wheat head blight fungus)).